A 261-amino-acid polypeptide reads, in one-letter code: Carnitinyl-CoA dehydratase (261 aa).

Residue Glu-111 is the Nucleophile of the active site. Catalysis depends on Glu-131, which acts as the Proton acceptor.

It belongs to the enoyl-CoA hydratase/isomerase family.

It carries out the reaction (R)-carnitinyl-CoA = crotonobetainyl-CoA + H2O. Its pathway is amine and polyamine metabolism; carnitine metabolism. In terms of biological role, catalyzes the reversible dehydration of L-carnitinyl-CoA to crotonobetainyl-CoA. The polypeptide is Carnitinyl-CoA dehydratase (Salmonella typhi).